Consider the following 406-residue polypeptide: Cysteine desulfurase (406 aa).

An N6-(pyridoxal phosphate)lysine modification is found at lysine 226. Residue cysteine 364 is the Cysteine persulfide intermediate of the active site.

The protein belongs to the class-V pyridoxal-phosphate-dependent aminotransferase family. Csd subfamily. In terms of assembly, homodimer. Interacts with SufE and the SufBCD complex composed of SufB, SufC and SufD. The interaction with SufE is required to mediate the direct transfer of the sulfur atom from the S-sulfanylcysteine. The cofactor is pyridoxal 5'-phosphate.

It is found in the cytoplasm. It catalyses the reaction (sulfur carrier)-H + L-cysteine = (sulfur carrier)-SH + L-alanine. The enzyme catalyses L-selenocysteine + AH2 = hydrogenselenide + L-alanine + A + H(+). Its pathway is cofactor biosynthesis; iron-sulfur cluster biosynthesis. In terms of biological role, cysteine desulfurases mobilize the sulfur from L-cysteine to yield L-alanine, an essential step in sulfur metabolism for biosynthesis of a variety of sulfur-containing biomolecules. Component of the suf operon, which is activated and required under specific conditions such as oxidative stress and iron limitation. Acts as a potent selenocysteine lyase in vitro, that mobilizes selenium from L-selenocysteine. Selenocysteine lyase activity is however unsure in vivo. The protein is Cysteine desulfurase of Escherichia coli O127:H6 (strain E2348/69 / EPEC).